The sequence spans 421 residues: MRILVFLWLGLSSLFAVDATLEVVKKFANMPSIIVEDSSTREVERGLTLRVYKMLVGDLKVSSHFNVQEGGASSFDMVMDYGAYRQKKVDLVAKVKAGREGSGILAELRLYDVNSGDSVFAKSYTVAREDRYPFVAHKMAIDINNYIKAPSIDWMNRFVVLSKYTAPSESQIVVADYTLTFQNVIIKDGRLNIFPKWANEQQDAIYYTKYLTKPTLFRYNLYTGESRKITESEGMLVASDVSADGKKLLLTMAPHTQSDIFLFDTQTGTRKQLTRYPGIDVSAHFIEDERRIMFISDRLGYPNVFATGLDGSETVEQMVFHGRNNNAASAFGQYIVYSSRESSNEFDTNTFNLYLVSTKSDYIRRLTANGVNQMPRFSQDGETVMYLKHNGAQSALGVIRLNYNKSYLFPLPSGKIQSMDW.

Positions 1-16 are cleaved as a signal peptide; it reads MRILVFLWLGLSSLFA.

Belongs to the TolB family. In terms of assembly, the Tol-Pal system is composed of five core proteins: the inner membrane proteins TolA, TolQ and TolR, the periplasmic protein TolB and the outer membrane protein Pal. They form a network linking the inner and outer membranes and the peptidoglycan layer.

The protein localises to the periplasm. Functionally, part of the Tol-Pal system, which plays a role in outer membrane invagination during cell division and is important for maintaining outer membrane integrity. The sequence is that of Tol-Pal system protein TolB from Wolinella succinogenes (strain ATCC 29543 / DSM 1740 / CCUG 13145 / JCM 31913 / LMG 7466 / NCTC 11488 / FDC 602W) (Vibrio succinogenes).